The primary structure comprises 882 residues: DNA mismatch repair protein MutS (882 aa).

ATP is bound at residue 629–636 (GPNMGGKS).

The protein belongs to the DNA mismatch repair MutS family.

This protein is involved in the repair of mismatches in DNA. It is possible that it carries out the mismatch recognition step. This protein has a weak ATPase activity. In Ralstonia pickettii (strain 12J), this protein is DNA mismatch repair protein MutS.